The chain runs to 246 residues: 1-(5-phosphoribosyl)-5-[(5-phosphoribosylamino)methylideneamino] imidazole-4-carboxamide isomerase (246 aa).

The Proton acceptor role is filled by aspartate 10. Aspartate 135 acts as the Proton donor in catalysis.

This sequence belongs to the HisA/HisF family.

It is found in the cytoplasm. It carries out the reaction 1-(5-phospho-beta-D-ribosyl)-5-[(5-phospho-beta-D-ribosylamino)methylideneamino]imidazole-4-carboxamide = 5-[(5-phospho-1-deoxy-D-ribulos-1-ylimino)methylamino]-1-(5-phospho-beta-D-ribosyl)imidazole-4-carboxamide. It participates in amino-acid biosynthesis; L-histidine biosynthesis; L-histidine from 5-phospho-alpha-D-ribose 1-diphosphate: step 4/9. This chain is 1-(5-phosphoribosyl)-5-[(5-phosphoribosylamino)methylideneamino] imidazole-4-carboxamide isomerase, found in Methanosarcina mazei (strain ATCC BAA-159 / DSM 3647 / Goe1 / Go1 / JCM 11833 / OCM 88) (Methanosarcina frisia).